The sequence spans 179 residues: MNRLKEKFQKEITPALMSKFNYKSVMEVPKIEKIVINTGVGDAVSNSKALDNAVEELTQIAGQKPVVTRAKKSIAGFRLREGMPIGAKVTLRGQQMYEFFDKLVSVSLPRVRDFRGVSKKSFDGRGNYTLGVKEQLIFPEIDYDKVSKVRGMDIVIVTTAKTDEEARELLTQFGMPFQK.

The protein belongs to the universal ribosomal protein uL5 family. Part of the 50S ribosomal subunit; part of the 5S rRNA/L5/L18/L25 subcomplex. Contacts the 5S rRNA and the P site tRNA. Forms a bridge to the 30S subunit in the 70S ribosome.

In terms of biological role, this is one of the proteins that bind and probably mediate the attachment of the 5S RNA into the large ribosomal subunit, where it forms part of the central protuberance. In the 70S ribosome it contacts protein S13 of the 30S subunit (bridge B1b), connecting the 2 subunits; this bridge is implicated in subunit movement. Contacts the P site tRNA; the 5S rRNA and some of its associated proteins might help stabilize positioning of ribosome-bound tRNAs. The protein is Large ribosomal subunit protein uL5 of Bacillus mycoides (strain KBAB4) (Bacillus weihenstephanensis).